Reading from the N-terminus, the 37-residue chain is Diuretic hormone 1 (37 aa).

This sequence belongs to the sauvagine/corticotropin-releasing factor/urotensin I family.

It is found in the secreted. Stimulates fluid secretion by the Malpighian tubules. Increases cyclic AMP production. This is Diuretic hormone 1 from Tenebrio molitor (Yellow mealworm beetle).